Here is a 557-residue protein sequence, read N- to C-terminus: Dihydroxy-acid dehydratase (557 aa).

A Mg(2+)-binding site is contributed by Asp-78. Cys-119 provides a ligand contact to [2Fe-2S] cluster. Mg(2+) contacts are provided by Asp-120 and Lys-121. Residue Lys-121 is modified to N6-carboxylysine. Cys-192 lines the [2Fe-2S] cluster pocket. Glu-446 lines the Mg(2+) pocket. The active-site Proton acceptor is Ser-472.

The protein belongs to the IlvD/Edd family. In terms of assembly, homodimer. Requires [2Fe-2S] cluster as cofactor. Mg(2+) is required as a cofactor.

It catalyses the reaction (2R)-2,3-dihydroxy-3-methylbutanoate = 3-methyl-2-oxobutanoate + H2O. The catalysed reaction is (2R,3R)-2,3-dihydroxy-3-methylpentanoate = (S)-3-methyl-2-oxopentanoate + H2O. Its pathway is amino-acid biosynthesis; L-isoleucine biosynthesis; L-isoleucine from 2-oxobutanoate: step 3/4. The protein operates within amino-acid biosynthesis; L-valine biosynthesis; L-valine from pyruvate: step 3/4. Functionally, functions in the biosynthesis of branched-chain amino acids. Catalyzes the dehydration of (2R,3R)-2,3-dihydroxy-3-methylpentanoate (2,3-dihydroxy-3-methylvalerate) into 2-oxo-3-methylpentanoate (2-oxo-3-methylvalerate) and of (2R)-2,3-dihydroxy-3-methylbutanoate (2,3-dihydroxyisovalerate) into 2-oxo-3-methylbutanoate (2-oxoisovalerate), the penultimate precursor to L-isoleucine and L-valine, respectively. In Campylobacter curvus (strain 525.92), this protein is Dihydroxy-acid dehydratase.